The sequence spans 668 residues: DNA ligase (668 aa).

NAD(+)-binding positions include 37–41 (DAVYD), 86–87 (SM), and E116. The active-site N6-AMP-lysine intermediate is the K118. 4 residues coordinate NAD(+): R139, E173, K288, and K312. Zn(2+) contacts are provided by C406, C409, C424, and C429. One can recognise a BRCT domain in the interval 590–668 (APDNFFKEKT…EQEAIAKIEK (79 aa)).

The protein belongs to the NAD-dependent DNA ligase family. LigA subfamily. It depends on Mg(2+) as a cofactor. Mn(2+) is required as a cofactor.

It carries out the reaction NAD(+) + (deoxyribonucleotide)n-3'-hydroxyl + 5'-phospho-(deoxyribonucleotide)m = (deoxyribonucleotide)n+m + AMP + beta-nicotinamide D-nucleotide.. In terms of biological role, DNA ligase that catalyzes the formation of phosphodiester linkages between 5'-phosphoryl and 3'-hydroxyl groups in double-stranded DNA using NAD as a coenzyme and as the energy source for the reaction. It is essential for DNA replication and repair of damaged DNA. This chain is DNA ligase, found in Lactobacillus johnsonii (strain CNCM I-12250 / La1 / NCC 533).